The following is a 200-amino-acid chain: Insulin, isoform 2 (200 aa).

A disordered region spans residues 148–200 (EVDSSPQPQGSESLPAQPPAQPAPQPEPQQAREPSPEVSCCGLWPRRPQRSQN). A compositionally biased stretch (pro residues) spans 163–174 (AQPPAQPAPQPE). Over residues 175–184 (PQQAREPSPE) the composition is skewed to low complexity.

In terms of tissue distribution, expressed in pancreas, eye and, to a lower extent, in limb.

This is Insulin, isoform 2 (INS-IGF2) from Homo sapiens (Human).